A 611-amino-acid polypeptide reads, in one-letter code: MAIQVLPPQLANQIAAGEVVERPASVVKELVENSLDAGATRIDIDIEKGGAKLIRIRDNGCGIAKDELAMALARHATSKITSLDDLEAIISLGFRGEALASISSVSRLTLTSRTEAQTEAWQAYAEGRDQAVTVKPAAHPVGTTLEVLDLFYNTPARRKFMRTEKTEFTHIDEIIRRIALVRFDVAISLTHNGKLVRQYRAVSDDGQRERRLGAICGTAFLSHALKIDWQHGELSLHGWVADPSGSKALSELQYCYVNGRMMRDRLINHAIRQAYEDKLGDRHQPAYVLYLEIDPHQVDVNVHPAKHEVRFHQSRLVHDFIYQGVVSVLQESGAETLPEIATAQPAERWQPENRQAAGGNHFATPAPAAAPRPASTASSSWQRQEPVYQKREGAAYQQLLQTPTRSEEPPLSPASVTQNDAPALSAHAQSFGRVLTIVREQYALLEGKKGLALLALTVAERWLKQAQLEPGSEGLRPQPLLIPVRLKLDKAERDAGNRCSELLNQMGIDLKFDAHHVMLRAVPLPLRQQNLQNLIPEMLGYLAQHQDVTAFQLAQWFARQSASEHQHWNHSQAITLLAEVERLCPTLVKSPPSGLLQNVDIEMAMNALKHE.

Residues 353 to 387 (NRQAAGGNHFATPAPAAAPRPASTASSSWQRQEPV) form a disordered region. Low complexity predominate over residues 363–380 (ATPAPAAAPRPASTASSS).

It belongs to the DNA mismatch repair MutL/HexB family.

In terms of biological role, this protein is involved in the repair of mismatches in DNA. It is required for dam-dependent methyl-directed DNA mismatch repair. May act as a 'molecular matchmaker', a protein that promotes the formation of a stable complex between two or more DNA-binding proteins in an ATP-dependent manner without itself being part of a final effector complex. The sequence is that of DNA mismatch repair protein MutL from Erwinia tasmaniensis (strain DSM 17950 / CFBP 7177 / CIP 109463 / NCPPB 4357 / Et1/99).